Consider the following 499-residue polypeptide: Aldehyde dehydrogenase 1 (499 aa).

Residues 164–166 (IPW), 164–167 (IPWN), 190–193 (KPAE), 223–224 (GS), 243–244 (GS), 243–248 (GSTKVG), and 266–268 (ELG) contribute to the NAD(+) site. Residue glutamate 266 is the Proton acceptor of the active site. Cysteine 300 functions as the Nucleophile in the catalytic mechanism. NAD(+) is bound by residues 346–350 (QQYEK) and 397–399 (EIF).

Belongs to the aldehyde dehydrogenase family. Homotetramer. As to expression, expressed in flowers and disk florets.

The enzyme catalyses an aldehyde + NAD(+) + H2O = a carboxylate + NADH + 2 H(+). The catalysed reaction is an aldehyde + NADP(+) + H2O = a carboxylate + NADPH + 2 H(+). It carries out the reaction octanal + NADP(+) + H2O = octanoate + NADPH + 2 H(+). It catalyses the reaction (1R,3R)-chrysanthemal + NAD(+) + H2O = (1R,3R)-chrysanthemate + NADH + 2 H(+). The enzyme catalyses (1R,3R)-chrysanthemal + NADP(+) + H2O = (1R,3R)-chrysanthemate + NADPH + 2 H(+). The catalysed reaction is (E)-hept-2-enal + NADP(+) + H2O = (E)-hept-2-enoate + NADPH + 2 H(+). It carries out the reaction dodecanal + NADP(+) + H2O = dodecanoate + NADPH + 2 H(+). It catalyses the reaction citral + NADP(+) + H2O = 3,7-dimethylocta-2,6-dienoate + NADPH + 2 H(+). The enzyme catalyses perillyl aldehyde + NADP(+) + H2O = perillate + NADPH + 2 H(+). The catalysed reaction is (2E,6E)-farnesal + NADP(+) + H2O = (2E,6E)-farnesoate + NADPH + 2 H(+). It carries out the reaction (S)-(-)-citronellal + NADP(+) + H2O = (S)-(-)-citronellate + NADPH + 2 H(+). The protein operates within isoprenoid biosynthesis. In terms of biological role, component of the monoterpenoid pyrethrins biosynthesis; pyrethrins are widely used plant-derived pesticide. Mediates the conversion of trans-chrysanthemal into trans-chrysanthemic acid. Can also use octanal, hept-2-enal, dodecanal, citral, farnesal, citronellal and perillyl aldehyde as substrates. The chain is Aldehyde dehydrogenase 1 from Tanacetum cinerariifolium (Dalmatian daisy).